We begin with the raw amino-acid sequence, 413 residues long: Bestrophin homolog 13 (413 aa).

4 helical membrane-spanning segments follow: residues 29-49 (LIYL…IDLI), 72-92 (SYTR…NVVA), 236-256 (LVYT…TLFG), and 272-292 (LVVP…FKVG).

It belongs to the anion channel-forming bestrophin (TC 1.A.46) family. Calcium-sensitive chloride channel subfamily. Forms oligomers.

Its subcellular location is the cell membrane. In terms of biological role, forms chloride channels. This chain is Bestrophin homolog 13 (best-13), found in Caenorhabditis elegans.